A 405-amino-acid polypeptide reads, in one-letter code: MSNYRRGVGSYSRMLGGGTNPFAAYTARKAKTKKRVLDKYEIIGYIAAGTYGRVYKARSKDPGDTNQYAIKKFKADKEGEMVHYAGISQSACREVALCAELDNRNITKLVETILEDTCIYMVFEYAEHDLLQIIHYHSHPERKPIPEYTLKSILWQLLNGVSYLHQNWVLHRDLKPANTMVTSDGVLKIGDLGLARLFSNPLQSLYSGDKVVVTIWYRAPELLLGARHYSPAVDLWAVGCIFAELLALRPIFKGEEAKMDNKTNVPFQRNQMQKIIEILGSPQEDDWPSLSKFPEYESLKQMKTFPPNLEAWYQSIGGTNQKGFQLLSRLLEYDPAKRLTANDALLHPYFTEAPKVSQNVFERQEYKYPPRRISCEDSDIKTMTYQGTKRGSQGGDNLHPRKKQK.

A Protein kinase domain is found at 40 to 350; sequence YEIIGYIAAG…ANDALLHPYF (311 aa). Residues 46–54 and Lys71 contribute to the ATP site; that span reads IAAGTYGRV. Asp173 serves as the catalytic Proton acceptor. The interval 377-405 is disordered; it reads DSDIKTMTYQGTKRGSQGGDNLHPRKKQK. Residues 381-391 show a composition bias toward polar residues; sequence KTMTYQGTKRG.

It belongs to the protein kinase superfamily. CMGC Ser/Thr protein kinase family. CDC2/CDKX subfamily. In terms of assembly, component of the srb8-11 complex, a regulatory module of the Mediator complex. It depends on Mg(2+) as a cofactor.

It is found in the nucleus. The enzyme catalyses L-seryl-[protein] + ATP = O-phospho-L-seryl-[protein] + ADP + H(+). The catalysed reaction is L-threonyl-[protein] + ATP = O-phospho-L-threonyl-[protein] + ADP + H(+). It carries out the reaction [DNA-directed RNA polymerase] + ATP = phospho-[DNA-directed RNA polymerase] + ADP + H(+). Functionally, component of the srb8-11 complex. The srb8-11 complex is a regulatory module of the Mediator complex which is itself dependent transcription. The srb8-11 complex may be involved in the transcriptional repression of a subset of genes regulated by Mediator. It may inhibit the association of the Mediator complex with RNA polymerase II to form the holoenzyme complex. The srb8-11 complex phosphorylates the C-terminal domain (CTD) of the largest subunit of RNA polymerase II. The protein is Serine/threonine-protein kinase SSN3 (SSN3) of Yarrowia lipolytica (strain CLIB 122 / E 150) (Yeast).